Reading from the N-terminus, the 365-residue chain is Alanine racemase (365 aa).

Lysine 32 (proton acceptor; specific for D-alanine) is an active-site residue. Residue lysine 32 is modified to N6-(pyridoxal phosphate)lysine. Arginine 128 serves as a coordination point for substrate. Tyrosine 257 (proton acceptor; specific for L-alanine) is an active-site residue. A substrate-binding site is contributed by methionine 305.

The protein belongs to the alanine racemase family. Pyridoxal 5'-phosphate is required as a cofactor.

The catalysed reaction is L-alanine = D-alanine. The protein operates within amino-acid biosynthesis; D-alanine biosynthesis; D-alanine from L-alanine: step 1/1. Functionally, catalyzes the interconversion of L-alanine and D-alanine. May also act on other amino acids. The sequence is that of Alanine racemase (alr) from Francisella tularensis subsp. mediasiatica (strain FSC147).